The chain runs to 483 residues: Acetyltransferase AOL_s00215g273 (483 aa).

Transmembrane regions (helical) follow at residues 9–29 (ALIGVTVIPTLILSLPTTSFV), 33–53 (IYPLPALLVLRALLWPPTEGL), 141–161 (VAYIFESMVSILSIYLGLYTC), 191–211 (IFQMVVAFMGIFAMVSNSVLV), 292–312 (FLVFSAFGVSGLLHSLAVYYG), 334–354 (VTGYFFYIQPFAITLEDFICW), 372–392 (WFVGMVYTLTWFTWGTAVLWI), and 453–473 (LGGYLYLYAYTTLEILGGSGF).

It belongs to the wax synthase family.

It localises to the membrane. Its pathway is secondary metabolite biosynthesis; terpenoid biosynthesis. Acetyltransferase; part of the gene cluster that mediates the biosynthesis of sesquiterpenyl epoxy-cyclohexenoids (SECs) such as anthrobotrisins and arthrosporols, metabolites that possess a novel hybrid carbon skeleton consisting of a polyketide-derived epoxycyclohexenol combined with a terpenoid-derived monocyclic sesquiterpenol substructure (PKS-PTS hybrid). The SEC pathway plays an important role for fungal soil colonization via decreasing fungal nematode-capturing ability. The role of the acetyltransferase in SEC biosynthesis has still to be determined. The pathway begins with the biosynthesis of 6-methylsalicylic acid (6-MSA), the first precursor of the polyketide-derived epoxycyclohexenol in arthrosporols, by the polyketide synthase (PKS) AOL_s00215g283 via condensation of 1 acetate and 3 malonate units. The 6-methylsalicylic acid decarboxylase AOL_s00215g281 then catalyzes the decarboxylation of 6-methylsalicylic acid to yield m-cresol. The cytochrome P450 monooxygenase AOL_s00215g282 further oxidizes m-cresol to yield toluquinol. With the assistance of the oxidoreductase AOL_s00215g277, the polyprenyl transferase AOL_s00215g276 catalyzes the farnesylation of toluquinol to produce farnesyl hydroquinone, the hybrid precursor for biosynthesis of SECs. Farnesyl hydroquinone undergoes epoxidation and then subsequent dehydrogenation to form farnesyl epoxy-quinone, the first and simplest SEC. The cytochrome P450 monooxygenase AOL_s00215g278 and the FAD-dependent monooxygenase AOL_s00215g279 might be involved in the oxygenation of the phenol moiety, most likely in the epoxy formation. The cytochrome P450 monooxygenases AOL_s00215g274 and AOL_s00215g280 are involved in specific regional ketone reductions at respectively C-4 and C-1 of farnesyl epoxy-quinone PubMed:33823587. In Arthrobotrys oligospora (strain ATCC 24927 / CBS 115.81 / DSM 1491) (Nematode-trapping fungus), this protein is Acetyltransferase AOL_s00215g273.